The primary structure comprises 544 residues: Chaperonin GroEL (544 aa).

ATP is bound by residues 30-33 (TLGP), K51, 87-91 (DGTTT), G415, and D496.

The protein belongs to the chaperonin (HSP60) family. As to quaternary structure, forms a cylinder of 14 subunits composed of two heptameric rings stacked back-to-back. Interacts with the co-chaperonin GroES.

The protein localises to the cytoplasm. It catalyses the reaction ATP + H2O + a folded polypeptide = ADP + phosphate + an unfolded polypeptide.. Its function is as follows. Together with its co-chaperonin GroES, plays an essential role in assisting protein folding. The GroEL-GroES system forms a nano-cage that allows encapsulation of the non-native substrate proteins and provides a physical environment optimized to promote and accelerate protein folding. The polypeptide is Chaperonin GroEL (Granulibacter bethesdensis (strain ATCC BAA-1260 / CGDNIH1)).